The sequence spans 576 residues: Adenine deaminase (576 aa).

This sequence belongs to the metallo-dependent hydrolases superfamily. Adenine deaminase family. Mn(2+) is required as a cofactor.

It carries out the reaction adenine + H2O + H(+) = hypoxanthine + NH4(+). In Syntrophobacter fumaroxidans (strain DSM 10017 / MPOB), this protein is Adenine deaminase.